The chain runs to 236 residues: Small ribosomal subunit protein uS2c (236 aa).

Belongs to the universal ribosomal protein uS2 family.

The protein localises to the plastid. It localises to the chloroplast. The polypeptide is Small ribosomal subunit protein uS2c (rps2) (Lolium perenne (Perennial ryegrass)).